We begin with the raw amino-acid sequence, 150 residues long: Ribosomal RNA large subunit methyltransferase H (150 aa).

Residues alanine 100 and 118 to 123 (LSEMTF) each bind S-adenosyl-L-methionine.

The protein belongs to the RNA methyltransferase RlmH family. Homodimer.

It localises to the cytoplasm. It carries out the reaction pseudouridine(1915) in 23S rRNA + S-adenosyl-L-methionine = N(3)-methylpseudouridine(1915) in 23S rRNA + S-adenosyl-L-homocysteine + H(+). Its function is as follows. Specifically methylates the pseudouridine at position 1915 (m3Psi1915) in 23S rRNA. In Helicobacter pylori (strain ATCC 700392 / 26695) (Campylobacter pylori), this protein is Ribosomal RNA large subunit methyltransferase H.